Reading from the N-terminus, the 817-residue chain is MYGVCGCCGALRPRYKRLVDNIFPEDPEDGLVKTNMEKLTFYALSAPEKLDRIGAYLSERLIRDVGRHRYGYVCIAMEALDQLLMACHCQSINLFVESFLKMVAKLLESEKPNLQILGTNSFVKFANIEEDTPSYHRSYDFFVSRFSEMCHSSHDDLEIKTKIRMSGIKGLQGVVRKTVNDELQANIWDPQHMDKIVPSLLFNLQHVEEAESRSPSPLQAPEKEKESPAELAERCLRELLGRAAFGNIKNAIKPVLIHLDNHSLWEPKVFAIRCFKIIMYSIQPQHSHLVIQQLLGHLDANSRSAATVRAGIVEVLSEAAVIAATGSVGPTVLEMFNTLLRQLRLSIDYALTGSYDGAVSLGTKIIKEHEERMFQEAVIKTVGSFASTLPTYQRSEVILFIMSKVPRPSLHQAVDTGRTGENRNRLTQIMLLKSLLQVSTGFQCNNMMSALPSNFLDRLLSTALMEDAEIRLFVLEILISFIDRHGNRHKFSTISTLSDISVLKLKVDKCSRQDTVFMKKHSQQLYRHIYLSCKEETNVQKHYEALYGLLALISIELANEEVVVDLIRLVLAVQDVAQVNEENLPVYNRCALYALGAAYLNLISQLTTVPAFCQHIHEVIETRKKEAPYMLPEDVFVERPRLSQNLDGVVIELLFRQSKISEVLGGSGYNSDRLCLPYIPQLTDEDRLSKRRSIGETISLQVEVESRNSPEKEERVPAEEITYETLKKAIVDSVAVEEQERERRRQVVEKFQKAPFEEIAAHCGARASLLQSKLNQIFEITIRPPPSPSGTITAAYGQPQNHSIPVYEMKFPDLCVY.

A phosphoserine mark is found at Ser212, Ser214, and Ser216.

This sequence belongs to the EFR3 family. Component of a phosphatidylinositol 4-kinase (PI4K) complex, composed of PI4KA, EFR3 (EFR3A or EFR3B), TTC7 (TTC7A or TTC7B) and HYCC (HYCC1 or HYCC2). In terms of processing, palmitoylated at its N-terminus, anchoring the protein to the plasma membrane.

It is found in the cell membrane. The protein resides in the cytoplasm. It localises to the cytosol. In terms of biological role, component of a complex required to localize phosphatidylinositol 4-kinase (PI4K) to the plasma membrane. The complex acts as a regulator of phosphatidylinositol 4-phosphate (PtdIns(4)P) synthesis. In the complex, EFR3B probably acts as the membrane-anchoring component. Also involved in responsiveness to G-protein-coupled receptors; it is however unclear whether this role is direct or indirect. This Homo sapiens (Human) protein is Protein EFR3 homolog B.